The primary structure comprises 513 residues: ATP synthase subunit alpha 1 (513 aa).

Position 169-176 (169-176) interacts with ATP; the sequence is GDRQTGKT.

It belongs to the ATPase alpha/beta chains family. As to quaternary structure, F-type ATPases have 2 components, CF(1) - the catalytic core - and CF(0) - the membrane proton channel. CF(1) has five subunits: alpha(3), beta(3), gamma(1), delta(1), epsilon(1). CF(0) has three main subunits: a(1), b(2) and c(9-12). The alpha and beta chains form an alternating ring which encloses part of the gamma chain. CF(1) is attached to CF(0) by a central stalk formed by the gamma and epsilon chains, while a peripheral stalk is formed by the delta and b chains.

The protein localises to the cell inner membrane. The catalysed reaction is ATP + H2O + 4 H(+)(in) = ADP + phosphate + 5 H(+)(out). Functionally, produces ATP from ADP in the presence of a proton gradient across the membrane. The alpha chain is a regulatory subunit. The chain is ATP synthase subunit alpha 1 from Photobacterium profundum (strain SS9).